The primary structure comprises 241 residues: Methylthioribulose-1-phosphate dehydratase (241 aa).

A substrate-binding site is contributed by Cys96. The Zn(2+) site is built by His114 and His116. Catalysis depends on Glu138, which acts as the Proton donor/acceptor. Zn(2+) is bound at residue His194.

It belongs to the aldolase class II family. MtnB subfamily. In terms of assembly, homotetramer. Interacts with APAF1. May interact with CASP1. Zn(2+) is required as a cofactor. In terms of tissue distribution, expressed in skeletal muscle (at protein level).

It localises to the cytoplasm. The enzyme catalyses 5-(methylsulfanyl)-D-ribulose 1-phosphate = 5-methylsulfanyl-2,3-dioxopentyl phosphate + H2O. The protein operates within amino-acid biosynthesis; L-methionine biosynthesis via salvage pathway; L-methionine from S-methyl-5-thio-alpha-D-ribose 1-phosphate: step 2/6. Functionally, catalyzes the dehydration of methylthioribulose-1-phosphate (MTRu-1-P) into 2,3-diketo-5-methylthiopentyl-1-phosphate (DK-MTP-1-P). Functions in the methionine salvage pathway, which plays a key role in cancer, apoptosis, microbial proliferation and inflammation. May inhibit the CASP1-related inflammatory response (pyroptosis), the CASP9-dependent apoptotic pathway and the cytochrome c-dependent and APAF1-mediated cell death. The polypeptide is Methylthioribulose-1-phosphate dehydratase (Mus musculus (Mouse)).